The sequence spans 137 residues: uncharacterized protein (137 aa).

This sequence belongs to the ycf72 family.

It localises to the plastid. The protein localises to the chloroplast. This is an uncharacterized protein from Oryza nivara (Indian wild rice).